A 1009-amino-acid chain; its full sequence is Putative receptor-like protein 8 (1009 aa).

Positions 1–22 are cleaved as a signal peptide; sequence MKTNFVILLLLLCVFAISPSQQ. The Extracellular portion of the chain corresponds to 23–961; the sequence is EEINQHNPGI…EEDDEAPVDM (939 aa). Asn-159 and Asn-197 each carry an N-linked (GlcNAc...) asparagine glycan. An LRR 1; degenerate repeat occupies 204–231; it reads FEEVRSLELSAGLNGFVDNVEGYKSLRK. 25 LRR repeats span residues 232-255, 257-281, 282-305, 306-329, 331-354, 355-377, 379-402, 404-427, 442-465, 466-490, 492-514, 515-538, 540-565, 567-587, 588-612, 613-636, 638-660, 662-681, 682-705, 707-728, 729-752, 819-842, 843-866, 867-891, and 893-916; these read LKNL…PFIN, ATSL…EIKD, LTNL…LTHL, KKLK…VVCE, KNLW…LGRL, NKLR…TFNR, ESLE…PLAN, TKLK…SEPK, LEKI…ATIV, HELQ…GYAL, NLLR…MGEM, VNIT…FVTG, FSLK…SFTS, EELR…LLSS, NTTL…MSNL, SGLT…LLAI, FLSL…VGGE, GIKL…DTLL, EKVQ…VNTE, IYIL…LCDL, RNIR…LYNL, LDYM…ELGS, LSKL…SFSN, LKDI…LTNL, and SLVV…QFNT. N-linked (GlcNAc...) asparagine glycosylation occurs at Asn-267. Asn-390 and Asn-402 each carry an N-linked (GlcNAc...) asparagine glycan. N-linked (GlcNAc...) asparagine glycosylation is found at Asn-497, Asn-516, Asn-526, and Asn-551. Residues Asn-588 and Asn-611 are each glycosylated (N-linked (GlcNAc...) asparagine). 2 N-linked (GlcNAc...) asparagine glycosylation sites follow: Asn-716 and Asn-751. 4 N-linked (GlcNAc...) asparagine glycosylation sites follow: Asn-850, Asn-890, Asn-903, and Asn-934. The disordered stretch occupies residues 934 to 955; the sequence is NRSCDAKKTSDESENGGEEEDD. Positions 945-955 are enriched in acidic residues; that stretch reads ESENGGEEEDD. Residues 962-982 form a helical membrane-spanning segment; it reads LAFYFSSASTYVTTLIGIFIL. The Cytoplasmic segment spans residues 983–1009; it reads MCFDCPLRRAWLRIVDASIASVKSMLP.

The protein belongs to the RLP family.

The protein resides in the cell membrane. The protein is Putative receptor-like protein 8 of Arabidopsis thaliana (Mouse-ear cress).